We begin with the raw amino-acid sequence, 260 residues long: Flap endonuclease Xni (260 aa).

D112 contributes to the Mg(2+) binding site. Residues 168 to 258 form the 5'-3' exonuclease domain; the sequence is LQPSQLVDFW…FNLKDLRYTP (91 aa). L179, V190, and I193 together coordinate K(+). The interval 192 to 197 is interaction with DNA; it reads GIGEKT.

It belongs to the Xni family. Requires Mg(2+) as cofactor. K(+) is required as a cofactor.

Functionally, has flap endonuclease activity. During DNA replication, flap endonucleases cleave the 5'-overhanging flap structure that is generated by displacement synthesis when DNA polymerase encounters the 5'-end of a downstream Okazaki fragment. The polypeptide is Flap endonuclease Xni (Tolumonas auensis (strain DSM 9187 / NBRC 110442 / TA 4)).